A 305-amino-acid polypeptide reads, in one-letter code: 4-hydroxy-tetrahydrodipicolinate synthase 1 (305 aa).

Thr53 serves as a coordination point for pyruvate. The active-site Proton donor/acceptor is the Tyr141. The active-site Schiff-base intermediate with substrate is Lys169. Position 209 (Val209) interacts with pyruvate.

This sequence belongs to the DapA family. In terms of assembly, homotetramer; dimer of dimers.

Its subcellular location is the cytoplasm. It catalyses the reaction L-aspartate 4-semialdehyde + pyruvate = (2S,4S)-4-hydroxy-2,3,4,5-tetrahydrodipicolinate + H2O + H(+). It functions in the pathway amino-acid biosynthesis; L-lysine biosynthesis via DAP pathway; (S)-tetrahydrodipicolinate from L-aspartate: step 3/4. Its function is as follows. Catalyzes the condensation of (S)-aspartate-beta-semialdehyde [(S)-ASA] and pyruvate to 4-hydroxy-tetrahydrodipicolinate (HTPA). The protein is 4-hydroxy-tetrahydrodipicolinate synthase 1 of Streptomyces coelicolor (strain ATCC BAA-471 / A3(2) / M145).